Reading from the N-terminus, the 437-residue chain is Tryptophan--tRNA ligase (437 aa).

Residues 74–82 (PSGKVHLGH) carry the 'HIGH' region motif. Residues 321–325 (KMSSS) carry the 'KMSKS' region motif.

It belongs to the class-I aminoacyl-tRNA synthetase family.

It localises to the cytoplasm. It carries out the reaction tRNA(Trp) + L-tryptophan + ATP = L-tryptophyl-tRNA(Trp) + AMP + diphosphate + H(+). This is Tryptophan--tRNA ligase from Methanosarcina acetivorans (strain ATCC 35395 / DSM 2834 / JCM 12185 / C2A).